The chain runs to 592 residues: K(+) efflux antiporter 4 (592 aa).

The signal sequence occupies residues 1-35; sequence MRRCKNNTDKFSVITMRLLTLLLICTFFFFFSFAY. The next 12 membrane-spanning stretches (helical) occupy residues 169 to 189, 193 to 213, 221 to 241, 248 to 268, 279 to 299, 313 to 333, 343 to 363, 388 to 408, 437 to 457, 462 to 482, 491 to 511, and 535 to 555; these read LISD…AFAC, PVIT…LSFV, TVAQ…FSAA, AVAI…SGIT, GIFV…KFLM, VGTL…LPVL, VLSM…LFVL, LAAV…GLSL, NFFA…HFLW, ILLA…AIVV, TAVL…VLLS, and LVTT…GVLL.

It belongs to the monovalent cation:proton antiporter 2 (CPA2) transporter (TC 2.A.37) family. KEA (TC 2.A.37.1) subfamily. In terms of tissue distribution, expressed in roots, stems, leaves, flowers and silique.

Its subcellular location is the golgi apparatus membrane. The protein resides in the golgi apparatus. It is found in the trans-Golgi network membrane. It localises to the prevacuolar compartment membrane. The protein localises to the endomembrane system. It catalyses the reaction K(+)(in) + H(+)(out) = K(+)(out) + H(+)(in). Functionally, electroneutral K(+)/H(+) efflux antiporter involved in K(+) homeostasis and osmotic adjustment. Together with KEA5 and KEA6, promotes growth and development, and facilitates endosomal pH and ions homeostasis, as well as salt tolerance (e.g. K(+), NaCl and LiCl), probably by supporting cell wall biosynthesis during rapid etiolated seedling growth. The chain is K(+) efflux antiporter 4 from Arabidopsis thaliana (Mouse-ear cress).